Here is a 341-residue protein sequence, read N- to C-terminus: Major histocompatibility complex class I-related protein 1 (341 aa).

A signal peptide spans 1–22 (MGELMAFLLPLIIVLMVKHSDS). Residues 23 to 109 (RTHSLRYFRL…KRLQRHYNHS (87 aa)) form an alpha-1 region. Residues 23–201 (RTHSLRYFRL…EYGKDILQRT (179 aa)) form an antigen-binding cleft region. The Extracellular segment spans residues 23–302 (RTHSLRYFRL…QESETIPLVM (280 aa)). 8-(9H-purin-6-yl)-2-oxa-8-azabicyclo[3.3.1]nona-3,6-diene-4,6-dicarbaldehyde-binding residues include tyrosine 29 and arginine 31. Residues arginine 31, serine 46, and lysine 65 each contribute to the 5-(2-oxoethylideneamino)-6-(D-ribitylamino)uracil site. The 5-(2-oxopropylideneamino)-6-(D-ribitylamino)uracil site is built by arginine 31, serine 46, and lysine 65. 3 residues coordinate 7-hydroxy-6-methyl-8-(1-D-ribityl)lumazine: arginine 31, serine 46, and lysine 65. The 8-(9H-purin-6-yl)-2-oxa-8-azabicyclo[3.3.1]nona-3,6-diene-4,6-dicarbaldehyde site is built by lysine 65 and histidine 80. Lysine 65 contacts 2-amino-4-oxopteridine-6-carbaldehyde. Lysine 65 contributes to the pyridoxal binding site. A glycan (N-linked (GlcNAc...) asparagine) is linked at asparagine 107. The tract at residues 110–201 (GSHTYQRMIG…EYGKDILQRT (92 aa)) is alpha-2. 8-(9H-purin-6-yl)-2-oxa-8-azabicyclo[3.3.1]nona-3,6-diene-4,6-dicarbaldehyde is bound at residue arginine 116. 5-(2-oxoethylideneamino)-6-(D-ribitylamino)uracil-binding residues include arginine 116, tyrosine 174, and glutamine 175. 5-(2-oxopropylideneamino)-6-(D-ribitylamino)uracil is bound by residues arginine 116, tyrosine 174, and glutamine 175. 7-hydroxy-6-methyl-8-(1-D-ribityl)lumazine is bound by residues arginine 116, tyrosine 174, and glutamine 175. Disulfide bonds link cysteine 120-cysteine 183 and cysteine 222-cysteine 278. Positions 202-293 (EPPLVRVNRK…GVHMVLQVPQ (92 aa)) are alpha-3. Positions 203 to 299 (PPLVRVNRKE…QVPQESETIP (97 aa)) constitute an Ig-like C1-type domain. A connecting peptide region spans residues 294–302 (ESETIPLVM). A helical transmembrane segment spans residues 303–323 (KAVSGSIVLVIVLAGVGVLVW). Over 324–341 (RRRPREQNGAIYLPTPDR) the chain is Cytoplasmic.

It belongs to the MHC class I family. Heterotrimer that consists of MR1, B2M and metabolite antigen. Major classes of metabolite ligands presented by MR1 include riboflavin-related antigens, pyrimidines and ribityl lumazines, nucleobase adducts and folate derivatives. Forms reversible covalent Schiff base complexes with microbial pyrimidine-based metabolite, which serves as a molecular switch triggering complete folding, stable association with B2M and translocation of the ternary complex from endoplasmic reticulum to the plasma membrane. Alternatively, forms non-Schiff base complexes with ribityl lumazines. On antigen-presenting cells, the ternary complex interacts with TCR on MR1-restricted T cells. Interacts with TAPBP and TAPBPL chaperones in the endoplasmic reticulum. TAPBP associated or not with MHC class I peptide loading complex binds ligand-free MR1 or MR1-B2M complex, providing for stable MR1 pools ready for metabolite antigen processing. TAPBPL interacts with MR1 in a ligand-independent way; this interaction may stabilize MR1 pool and facilitate ligand loading and dissociation. Structurally, MR1-B2M heterodimer adopts a topology similar to classical MHC class I molecules, with alpha-1 and alpha-2 domains of MR1 forming the antigen-binding cleft composed of two alpha-helices resting on a floor of 7-stranded anti-parallel beta-pleated sheet. MR1-B2M heterodimer (via alpha-helices) interacts with TCR (via CDR domains). In terms of processing, N-glycosylated.

The protein localises to the cell membrane. It is found in the endoplasmic reticulum membrane. The protein resides in the golgi apparatus membrane. It localises to the early endosome membrane. Its subcellular location is the late endosome membrane. Antigen-presenting molecule specialized in displaying microbial pyrimidine-based metabolites to alpha-beta T cell receptors (TCR) on innate-type mucosal-associated invariant T (MAIT) cells. In complex with B2M preferentially presents riboflavin-derived metabolites to semi-invariant TCRs on MAIT cells, guiding immune surveillance of the microbial metabolome at mucosal epithelial barriers. Signature pyrimidine-based microbial antigens are generated via non-enzymatic condensation of metabolite intermediates of the riboflavin pathway with by-products arising from other metabolic pathways such as glycolysis. Typical potent antigenic metabolites are 5-(2-oxoethylideneamino)-6-D-ribitylaminouracil (5-OE-RU) and 5-(2-oxopropylideneamino)-6-D-ribitylaminouracil (5-OP-RU), products of condensation of 5-amino-6-D-ribityaminouracil (5-A-RU) with glyoxal or methylglyoxal by-products, respectively. May present microbial antigens to various MAIT cell subsets, providing for unique recognition of diverse microbes, including pathogens that do not synthesize riboflavin. Upon antigen recognition, elicits rapid innate-type MAIT cell activation to eliminate pathogenic microbes by directly killing infected cells. During T cell development, drives thymic selection and post-thymic terminal differentiation of MAIT cells in a process dependent on commensal microflora. Acts as an immune sensor of cancer cell metabolome. May present a tumor-specific or -associated metabolite essential for cancer cell survival to a pan-cancer TCR on a non-MAIT CD8-positive T cell clone, triggering T cell-mediated killing of a wide range of cancer cell types. May present tumor-enriched pyridoxal and pyridoxal 5'-phosphate antigens, enabling preferential recognition of cancer cells. Presents nucleobase carbonyl adducts generated during oxidative stress. Captures M3Ade, a nucleobase adduct composed of one adenine modified by a malondialdehyde trimer, for recognition by MR1-restricted T cell clones expressing a polyclonal TCR repertoire. The chain is Major histocompatibility complex class I-related protein 1 from Pan troglodytes (Chimpanzee).